The following is a 244-amino-acid chain: Ureidoacrylate amidohydrolase RutB (244 aa).

Residue D38 is the Proton acceptor of the active site. K147 is an active-site residue. The active-site Nucleophile is C180.

The protein belongs to the isochorismatase family. RutB subfamily.

The enzyme catalyses (Z)-3-ureidoacrylate + H2O + H(+) = (Z)-3-aminoacrylate + NH4(+) + CO2. It carries out the reaction (Z)-3-ureidoacrylate + H2O = (Z)-3-aminoacrylate + carbamate + H(+). It catalyses the reaction (Z)-2-methylureidoacrylate + H2O + H(+) = (Z)-2-methylaminoacrylate + NH4(+) + CO2. Hydrolyzes ureidoacrylate to form aminoacrylate and carbamate. The carbamate hydrolyzes spontaneously, thereby releasing one of the nitrogen atoms of the pyrimidine ring as ammonia and one of its carbon atoms as CO2. The protein is Ureidoacrylate amidohydrolase RutB of Escherichia coli O6:H1 (strain CFT073 / ATCC 700928 / UPEC).